A 140-amino-acid chain; its full sequence is Large ribosomal subunit protein uL22c (140 aa).

It belongs to the universal ribosomal protein uL22 family. In terms of assembly, part of the 50S ribosomal subunit.

Its subcellular location is the plastid. The protein localises to the chloroplast. Functionally, this protein binds specifically to 23S rRNA. In terms of biological role, the globular domain of the protein is located near the polypeptide exit tunnel on the outside of the subunit, while an extended beta-hairpin is found that lines the wall of the exit tunnel in the center of the 70S ribosome. In Calycanthus floridus var. glaucus (Eastern sweetshrub), this protein is Large ribosomal subunit protein uL22c (rpl22).